A 107-amino-acid chain; its full sequence is Iron-sulfur cluster assembly protein CyaY (107 aa).

This sequence belongs to the frataxin family.

Involved in iron-sulfur (Fe-S) cluster assembly. May act as a regulator of Fe-S biogenesis. The polypeptide is Iron-sulfur cluster assembly protein CyaY (Neisseria gonorrhoeae (strain ATCC 700825 / FA 1090)).